The following is a 146-amino-acid chain: Large ribosomal subunit protein uL15 (146 aa).

Residues 1–10 show a composition bias toward basic and acidic residues; that stretch reads MTLKLHDLRP. Positions 1-41 are disordered; that stretch reads MTLKLHDLRPARGSKIARTRVGRGDGSKGKTAGRGTKGTRA.

Belongs to the universal ribosomal protein uL15 family. Part of the 50S ribosomal subunit.

Its function is as follows. Binds to the 23S rRNA. In Mycobacterium tuberculosis (strain ATCC 25177 / H37Ra), this protein is Large ribosomal subunit protein uL15.